A 142-amino-acid chain; its full sequence is Nucleoside diphosphate kinase (142 aa).

ATP contacts are provided by Lys-11, Phe-59, Arg-87, Thr-93, Arg-104, and Asn-114. His-117 serves as the catalytic Pros-phosphohistidine intermediate.

This sequence belongs to the NDK family. It depends on Mg(2+) as a cofactor.

It is found in the cytoplasm. The enzyme catalyses a 2'-deoxyribonucleoside 5'-diphosphate + ATP = a 2'-deoxyribonucleoside 5'-triphosphate + ADP. It catalyses the reaction a ribonucleoside 5'-diphosphate + ATP = a ribonucleoside 5'-triphosphate + ADP. Its function is as follows. Major role in the synthesis of nucleoside triphosphates other than ATP. The ATP gamma phosphate is transferred to the NDP beta phosphate via a ping-pong mechanism, using a phosphorylated active-site intermediate. The protein is Nucleoside diphosphate kinase of Hyperthermus butylicus (strain DSM 5456 / JCM 9403 / PLM1-5).